The chain runs to 432 residues: Guanine nucleotide-binding protein subunit alpha (432 aa).

A disordered region spans residues Met1 to Gln97. Residue Gly2 is the site of N-myristoyl glycine attachment. Residue Cys4 is the site of S-palmitoyl cysteine attachment. Over residues Pro21–Ala52 the composition is skewed to low complexity. In terms of domain architecture, G-alpha spans Lys111 to Leu432. Positions Lys114–Thr127 are G1 motif. GTP-binding residues include Glu122, Ser123, Gly124, Lys125, Ser126, Thr127, Asp230, Leu255, Thr261, Gly283, Asn349, Lys350, Asp352, and Ala404. Residue Ser126 participates in Mg(2+) binding. The interval Asp253–Thr261 is G2 motif. Thr261 contacts Mg(2+). The interval Ile276–Arg285 is G3 motif. A G4 motif region spans residues Ile345 to Asp352. The segment at Thr402 to Thr407 is G5 motif.

This sequence belongs to the G-alpha family. G proteins are composed of 3 units; alpha, beta and gamma. The alpha chain contains the guanine nucleotide binding site. Mg(2+) is required as a cofactor.

Its function is as follows. Guanine nucleotide-binding proteins (G proteins) are involved as modulators or transducers in various transmembrane signaling systems. Involved in the mating pathway. This chain is Guanine nucleotide-binding protein subunit alpha (GPA1), found in Cryptococcus neoformans var. neoformans serotype D (strain B-3501A) (Filobasidiella neoformans).